The chain runs to 44 residues: Photosystem I reaction center subunit IX (44 aa).

Residues 7–27 form a helical membrane-spanning segment; sequence YLSVAPVLTTLWFGSLAGLLI.

It belongs to the PsaJ family.

The protein localises to the plastid. It localises to the chloroplast thylakoid membrane. May help in the organization of the PsaE and PsaF subunits. In Drimys granadensis, this protein is Photosystem I reaction center subunit IX.